Here is a 616-residue protein sequence, read N- to C-terminus: Ectonucleoside triphosphate diphosphohydrolase 4 (616 aa).

Over 1-33 (MGRIGISCLFPASWHFSISPVGCPRILNTNLRQ) the chain is Cytoplasmic. The chain crosses the membrane as a helical span at residues 34–54 (IMVISVLAAAVSLLYFSVVII). Over 55-559 (RNKYGRLTRD…ASHTHWRGVS (505 aa)) the chain is Lumenal. E222 (proton acceptor) is an active-site residue. C368 and C395 are disulfide-bonded. N-linked (GlcNAc...) asparagine glycosylation is found at N404 and N407. A disulfide bridge links C461 with C490. The helical transmembrane segment at 560–580 (FVYNHYLFSGCFLVVLLAILL) threads the bilayer. Topologically, residues 581-616 (YLLRLRRIHRRTPRSSSAAALWMEEGLPAQNAPGTL) are cytoplasmic.

It belongs to the GDA1/CD39 NTPase family. Ca(2+) is required as a cofactor. It depends on Mg(2+) as a cofactor. In terms of tissue distribution, ubiquitous. Highest expression in testis and lowest in bladder.

It is found in the cytoplasmic vesicle. The protein localises to the autophagosome membrane. The protein resides in the lysosome membrane. It localises to the golgi apparatus membrane. It carries out the reaction a ribonucleoside 5'-diphosphate + H2O = a ribonucleoside 5'-phosphate + phosphate + H(+). The catalysed reaction is a ribonucleoside 5'-triphosphate + H2O = a ribonucleoside 5'-diphosphate + phosphate + H(+). It catalyses the reaction UDP + H2O = UMP + phosphate + H(+). The enzyme catalyses UTP + H2O = UDP + phosphate + H(+). It carries out the reaction CTP + H2O = CDP + phosphate + H(+). The catalysed reaction is GDP + H2O = GMP + phosphate + H(+). It catalyses the reaction GTP + H2O = GDP + phosphate + H(+). The enzyme catalyses 5-methyl-UTP + H2O = 5-methyl-UDP + phosphate + H(+). Functionally, catalyzes the hydrolysis of nucleoside triphosphates and diphosphates in a calcium- or magnesium-dependent manner, with a preference for pyrimidines. Preferentially hydrolyzes UTP and TTP. AMP, ADP, ATP and UMP are not substrates. Preferentially activated by Ca(2+) over Mg(2+). Its function is as follows. Has a broad substrate specificity with the ability of cleaving all nucleotide di- and triphosphates with the exception of adenosine di- and triphosphate (ADP and ATP). Preferentially hydrolyzes CTP, UDP, CDP, GTP and GDP. Can use either Ca(2+) or Mg(2+) equally. The chain is Ectonucleoside triphosphate diphosphohydrolase 4 from Homo sapiens (Human).